We begin with the raw amino-acid sequence, 507 residues long: O-fucosyltransferase 30 (507 aa).

The helical; Signal-anchor for type II membrane protein transmembrane segment at 26–46 threads the bilayer; that stretch reads AIFLCSVSILVVFFIVVFFIT. 4 N-linked (GlcNAc...) asparagine glycosylation sites follow: N110, N146, N398, and N410.

Belongs to the glycosyltransferase GT106 family.

The protein resides in the membrane. Its pathway is glycan metabolism. This chain is O-fucosyltransferase 30, found in Arabidopsis thaliana (Mouse-ear cress).